The primary structure comprises 336 residues: UDP-3-O-acylglucosamine N-acyltransferase (336 aa).

His-236 functions as the Proton acceptor in the catalytic mechanism.

The protein belongs to the transferase hexapeptide repeat family. LpxD subfamily. Homotrimer.

It carries out the reaction a UDP-3-O-[(3R)-3-hydroxyacyl]-alpha-D-glucosamine + a (3R)-hydroxyacyl-[ACP] = a UDP-2-N,3-O-bis[(3R)-3-hydroxyacyl]-alpha-D-glucosamine + holo-[ACP] + H(+). Its pathway is bacterial outer membrane biogenesis; LPS lipid A biosynthesis. Functionally, catalyzes the N-acylation of UDP-3-O-acylglucosamine using 3-hydroxyacyl-ACP as the acyl donor. Is involved in the biosynthesis of lipid A, a phosphorylated glycolipid that anchors the lipopolysaccharide to the outer membrane of the cell. The sequence is that of UDP-3-O-acylglucosamine N-acyltransferase from Aromatoleum aromaticum (strain DSM 19018 / LMG 30748 / EbN1) (Azoarcus sp. (strain EbN1)).